Consider the following 277-residue polypeptide: Cell division protein ZipA (277 aa).

Topologically, residues 1–5 are periplasmic; sequence MQDLR. The helical transmembrane segment at 6-26 threads the bilayer; it reads LMLLLFGVITIIVLFLHGVWA. Residues 27 to 277 are Cytoplasmic-facing; that stretch reads RRKERSALFY…NALIRSTPHL (251 aa). Positions 120–139 are disordered; that stretch reads QKKSDDLSHQSKETHHPSIQ.

This sequence belongs to the ZipA family. Interacts with FtsZ via their C-terminal domains.

Its subcellular location is the cell inner membrane. Essential cell division protein that stabilizes the FtsZ protofilaments by cross-linking them and that serves as a cytoplasmic membrane anchor for the Z ring. Also required for the recruitment to the septal ring of downstream cell division proteins. The polypeptide is Cell division protein ZipA (Hamiltonella defensa subsp. Acyrthosiphon pisum (strain 5AT)).